Here is a 223-residue protein sequence, read N- to C-terminus: uncharacterized protein (223 aa).

The protein localises to the plastid. Its subcellular location is the chloroplast. This is an uncharacterized protein from Mesostigma viride (Green alga).